Here is a 179-residue protein sequence, read N- to C-terminus: Replication restart protein DnaT (179 aa).

Residues asparagine 155–glycine 179 are disordered.

This sequence belongs to the DnaT family. In terms of assembly, homooligomerizes. Interacts with PriB. Component of the replication restart primosome. Primosome assembly occurs via a 'hand-off' mechanism. PriA binds to replication forks, subsequently PriB then DnaT bind; DnaT then displaces ssDNA to generate the helicase loading substrate.

Its function is as follows. Involved in the restart of stalled replication forks, which reloads the replicative helicase on sites other than the origin of replication. Can function in multiple replication restart pathways. Displaces ssDNA from a PriB-ssDNA complex. Probably forms a spiral filament on ssDNA. The sequence is that of Replication restart protein DnaT from Escherichia coli O8 (strain IAI1).